The primary structure comprises 399 residues: Tryptophan synthase beta chain (399 aa).

Lysine 86 carries the post-translational modification N6-(pyridoxal phosphate)lysine.

The protein belongs to the TrpB family. In terms of assembly, tetramer of two alpha and two beta chains. The cofactor is pyridoxal 5'-phosphate.

The enzyme catalyses (1S,2R)-1-C-(indol-3-yl)glycerol 3-phosphate + L-serine = D-glyceraldehyde 3-phosphate + L-tryptophan + H2O. It participates in amino-acid biosynthesis; L-tryptophan biosynthesis; L-tryptophan from chorismate: step 5/5. Its function is as follows. The beta subunit is responsible for the synthesis of L-tryptophan from indole and L-serine. In Buchnera aphidicola subsp. Schizaphis graminum (strain Sg), this protein is Tryptophan synthase beta chain (trpB).